Reading from the N-terminus, the 312-residue chain is Ribosomal protein L11 methyltransferase (312 aa).

Residues T159, G180, D201, and N244 each coordinate S-adenosyl-L-methionine.

The protein belongs to the methyltransferase superfamily. PrmA family.

It localises to the cytoplasm. It catalyses the reaction L-lysyl-[protein] + 3 S-adenosyl-L-methionine = N(6),N(6),N(6)-trimethyl-L-lysyl-[protein] + 3 S-adenosyl-L-homocysteine + 3 H(+). Methylates ribosomal protein L11. The sequence is that of Ribosomal protein L11 methyltransferase from Desulfitobacterium hafniense (strain DSM 10664 / DCB-2).